Reading from the N-terminus, the 134-residue chain is Prefoldin subunit 4 (134 aa).

Ala2 bears the N-acetylalanine mark. The residue at position 125 (Ser125) is a Phosphoserine.

It belongs to the prefoldin subunit beta family. In terms of assembly, heterohexamer of two PFD-alpha type and four PFD-beta type subunits. Interacts with URI1; the interaction is phosphorylation-dependent and occurs in a growth-dependent manner.

It localises to the nucleus. Its subcellular location is the cytoplasm. The protein localises to the mitochondrion. Binds specifically to cytosolic chaperonin (c-CPN) and transfers target proteins to it. Binds to nascent polypeptide chain and promotes folding in an environment in which there are many competing pathways for nonnative proteins. In Homo sapiens (Human), this protein is Prefoldin subunit 4 (PFDN4).